The chain runs to 352 residues: Nicotinate-nucleotide--dimethylbenzimidazole phosphoribosyltransferase (352 aa).

Residue E316 is the Proton acceptor of the active site.

This sequence belongs to the CobT family.

The catalysed reaction is 5,6-dimethylbenzimidazole + nicotinate beta-D-ribonucleotide = alpha-ribazole 5'-phosphate + nicotinate + H(+). Its pathway is nucleoside biosynthesis; alpha-ribazole biosynthesis; alpha-ribazole from 5,6-dimethylbenzimidazole: step 1/2. Its function is as follows. Catalyzes the synthesis of alpha-ribazole-5'-phosphate from nicotinate mononucleotide (NAMN) and 5,6-dimethylbenzimidazole (DMB). The protein is Nicotinate-nucleotide--dimethylbenzimidazole phosphoribosyltransferase of Clostridium acetobutylicum (strain ATCC 824 / DSM 792 / JCM 1419 / IAM 19013 / LMG 5710 / NBRC 13948 / NRRL B-527 / VKM B-1787 / 2291 / W).